Consider the following 295-residue polypeptide: Shikimate dehydrogenase (NADP(+)) (295 aa).

Residues 22 to 24 and S69 each bind shikimate; that span reads SLS. K73 (proton acceptor) is an active-site residue. N94 and D111 together coordinate shikimate. Residues 135-139 and V236 each bind NADP(+); that span reads GAGGA. Residue Y238 coordinates shikimate. Position 260 (G260) interacts with NADP(+).

It belongs to the shikimate dehydrogenase family. In terms of assembly, homodimer.

The catalysed reaction is shikimate + NADP(+) = 3-dehydroshikimate + NADPH + H(+). It participates in metabolic intermediate biosynthesis; chorismate biosynthesis; chorismate from D-erythrose 4-phosphate and phosphoenolpyruvate: step 4/7. Functionally, involved in the biosynthesis of the chorismate, which leads to the biosynthesis of aromatic amino acids. Catalyzes the reversible NADPH linked reduction of 3-dehydroshikimate (DHSA) to yield shikimate (SA). This is Shikimate dehydrogenase (NADP(+)) from Streptococcus uberis (strain ATCC BAA-854 / 0140J).